The chain runs to 98 residues: Protein S100-A13 (98 aa).

One can recognise an EF-hand domain in the interval 18–53 (STFFTFAGREGRKGSLNINEFKELATQQLPHLLKDV). Ca(2+) contacts are provided by serine 32, glutamate 37, aspartate 64, asparagine 66, aspartate 68, glutamate 70, and glutamate 75. A Phosphoserine modification is found at serine 32.

It belongs to the S-100 family. In terms of assembly, homodimer. Part of a copper-dependent multiprotein complex containing S100A13, FGF1 and SYT1. Interacts with FGF1 and SYT1. Interacts with IL1A.

Its subcellular location is the cytoplasm. It is found in the secreted. Its function is as follows. Plays a role in the export of proteins that lack a signal peptide and are secreted by an alternative pathway. Binds two calcium ions per subunit. Binds one copper ion. Binding of one copper ion does not interfere with calcium binding. Required for the copper-dependent stress-induced export of IL1A and FGF1. The calcium-free protein binds to lipid vesicles containing phosphatidylserine, but not to vesicles containing phosphatidylcholine. The chain is Protein S100-A13 (S100a13) from Mus musculus (Mouse).